Consider the following 215-residue polypeptide: tRNA (guanine-N(7)-)-methyltransferase (215 aa).

Positions 44, 69, 96, and 118 each coordinate S-adenosyl-L-methionine. Residue aspartate 118 is part of the active site. Substrate contacts are provided by residues lysine 122, aspartate 154, and 192 to 195 (TEYE).

Belongs to the class I-like SAM-binding methyltransferase superfamily. TrmB family.

It carries out the reaction guanosine(46) in tRNA + S-adenosyl-L-methionine = N(7)-methylguanosine(46) in tRNA + S-adenosyl-L-homocysteine. It participates in tRNA modification; N(7)-methylguanine-tRNA biosynthesis. Its function is as follows. Catalyzes the formation of N(7)-methylguanine at position 46 (m7G46) in tRNA. The polypeptide is tRNA (guanine-N(7)-)-methyltransferase (Levilactobacillus brevis (strain ATCC 367 / BCRC 12310 / CIP 105137 / JCM 1170 / LMG 11437 / NCIMB 947 / NCTC 947) (Lactobacillus brevis)).